The sequence spans 274 residues: Glutamate racemase (274 aa).

Substrate contacts are provided by residues 9–10 and 41–42; these read DS and YG. C73 serves as the catalytic Proton donor/acceptor. Residue 74–75 participates in substrate binding; sequence NT. C183 functions as the Proton donor/acceptor in the catalytic mechanism. Position 184 to 185 (184 to 185) interacts with substrate; the sequence is TH.

Belongs to the aspartate/glutamate racemases family.

It carries out the reaction L-glutamate = D-glutamate. It functions in the pathway cell wall biogenesis; peptidoglycan biosynthesis. Provides the (R)-glutamate required for cell wall biosynthesis. In Shewanella baltica (strain OS195), this protein is Glutamate racemase.